Consider the following 208-residue polypeptide: Transmembrane protein 222 (208 aa).

A disordered region spans residues 1 to 26 (MAEAEGSSLLLLPPPPPPPRMAEVEA). The Extracellular segment spans residues 1–55 (MAEAEGSSLLLLPPPPPPPRMAEVEAPTAAETDMKQYQGSGGVAMDVERSRFPYC). A helical transmembrane segment spans residues 56–76 (VVWTPIPVLTWFFPIIGHMGI). Residues 77–164 (CTSTGVIRDF…MRYNNSTNWN (88 aa)) lie on the Cytoplasmic side of the membrane. The helical transmembrane segment at 165–185 (MVTLCFFCLLYGKYVSVGAFV) threads the bilayer. Position 186 (Lys186) is a topological domain, extracellular. The helical transmembrane segment at 187 to 207 (TWLPFILLLGIILTVSLVFNL) threads the bilayer. Arg208 is a topological domain (cytoplasmic).

As to expression, widely expressed. The highest expression is observed in the brain.

The protein resides in the membrane. The protein localises to the cell projection. It is found in the dendrite. This chain is Transmembrane protein 222 (TMEM222), found in Homo sapiens (Human).